The sequence spans 210 residues: Small ribosomal subunit protein uS4 (210 aa).

Residues 100-160 enclose the S4 RNA-binding domain; sequence GRLDNVVYRM…EKSKNQLRVK (61 aa).

Belongs to the universal ribosomal protein uS4 family. In terms of assembly, part of the 30S ribosomal subunit. Contacts protein S5. The interaction surface between S4 and S5 is involved in control of translational fidelity.

Its function is as follows. One of the primary rRNA binding proteins, it binds directly to 16S rRNA where it nucleates assembly of the body of the 30S subunit. In terms of biological role, with S5 and S12 plays an important role in translational accuracy. In Alcanivorax borkumensis (strain ATCC 700651 / DSM 11573 / NCIMB 13689 / SK2), this protein is Small ribosomal subunit protein uS4.